We begin with the raw amino-acid sequence, 440 residues long: 23S rRNA (uracil(1939)-C(5))-methyltransferase RlmD (440 aa).

The region spanning 10-68 (KSTQPQRIEFTVDSLDHHCVGIGRHQGKAIFIEGALPGELVKARILEDKKQYAHAALQQ) is the TRAM domain. Residues Cys-81, Cys-87, Cys-90, and Cys-169 each coordinate [4Fe-4S] cluster. Gln-273, Phe-302, Asn-307, Glu-323, Asp-350, and Asp-371 together coordinate S-adenosyl-L-methionine. Cys-397 (nucleophile) is an active-site residue.

The protein belongs to the class I-like SAM-binding methyltransferase superfamily. RNA M5U methyltransferase family. RlmD subfamily.

The catalysed reaction is uridine(1939) in 23S rRNA + S-adenosyl-L-methionine = 5-methyluridine(1939) in 23S rRNA + S-adenosyl-L-homocysteine + H(+). Its function is as follows. Catalyzes the formation of 5-methyl-uridine at position 1939 (m5U1939) in 23S rRNA. The sequence is that of 23S rRNA (uracil(1939)-C(5))-methyltransferase RlmD from Aeromonas hydrophila subsp. hydrophila (strain ATCC 7966 / DSM 30187 / BCRC 13018 / CCUG 14551 / JCM 1027 / KCTC 2358 / NCIMB 9240 / NCTC 8049).